The chain runs to 93 residues: DNA-directed RNA polymerase subunit omega (93 aa).

It belongs to the RNA polymerase subunit omega family. As to quaternary structure, the RNAP catalytic core consists of 2 alpha, 1 beta, 1 beta' and 1 omega subunit. When a sigma factor is associated with the core the holoenzyme is formed, which can initiate transcription.

The enzyme catalyses RNA(n) + a ribonucleoside 5'-triphosphate = RNA(n+1) + diphosphate. In terms of biological role, promotes RNA polymerase assembly. Latches the N- and C-terminal regions of the beta' subunit thereby facilitating its interaction with the beta and alpha subunits. The protein is DNA-directed RNA polymerase subunit omega of Actinobacillus pleuropneumoniae serotype 3 (strain JL03).